Consider the following 283-residue polypeptide: 2-dehydro-3-deoxyphosphooctonate aldolase (283 aa).

Belongs to the KdsA family.

Its subcellular location is the cytoplasm. The catalysed reaction is D-arabinose 5-phosphate + phosphoenolpyruvate + H2O = 3-deoxy-alpha-D-manno-2-octulosonate-8-phosphate + phosphate. It participates in carbohydrate biosynthesis; 3-deoxy-D-manno-octulosonate biosynthesis; 3-deoxy-D-manno-octulosonate from D-ribulose 5-phosphate: step 2/3. The protein operates within bacterial outer membrane biogenesis; lipopolysaccharide biosynthesis. The polypeptide is 2-dehydro-3-deoxyphosphooctonate aldolase (Parasynechococcus marenigrum (strain WH8102)).